We begin with the raw amino-acid sequence, 156 residues long: Ribosomal RNA large subunit methyltransferase H (156 aa).

S-adenosyl-L-methionine contacts are provided by residues L73, G104, and 123 to 128; that span reads LSSLTL.

This sequence belongs to the RNA methyltransferase RlmH family. Homodimer.

The protein resides in the cytoplasm. The catalysed reaction is pseudouridine(1915) in 23S rRNA + S-adenosyl-L-methionine = N(3)-methylpseudouridine(1915) in 23S rRNA + S-adenosyl-L-homocysteine + H(+). Its function is as follows. Specifically methylates the pseudouridine at position 1915 (m3Psi1915) in 23S rRNA. The polypeptide is Ribosomal RNA large subunit methyltransferase H (Neisseria gonorrhoeae (strain ATCC 700825 / FA 1090)).